A 172-amino-acid polypeptide reads, in one-letter code: Putative phosphoesterase Bcer98_0945 (172 aa).

The Proton donor role is filled by histidine 34. Short sequence motifs (HXTX) lie at residues 34-37 (HITL) and 115-118 (HLTI). Catalysis depends on histidine 115, which acts as the Proton acceptor.

The protein belongs to the 2H phosphoesterase superfamily. YjcG family.

The polypeptide is Putative phosphoesterase Bcer98_0945 (Bacillus cytotoxicus (strain DSM 22905 / CIP 110041 / 391-98 / NVH 391-98)).